The chain runs to 535 residues: MPLPNHVTSHLRSLQLAPAAVHYNLKRPRLYEEALDRNEGQLAAGGPLVTRTAPYTGRSPKDRFIVRDASVADQINWGEVNQPTDRATFDHLHERMAEHAEGRDLFVQDLHAGWDESYRLPVRIITEKAWHSLFARNMFVRPDGPVPDSFEPGFTVVDLCEFEADPERDGTHSEAAVFVDIAQNLILIGGTHYGGEIKKSIFSVLNYMLPEEGVLPMHCSANEGEDGDTAVFFGLSGTGKTTLSADASRTLIGDDEHGWSDRGVYNFEGGCYAKMIDITPESEPEIHGTTEEFGTILENVIVDPDTREPDFSDDTITQNTRGSYPLHYIPNTSSDGRGGHPDHVLFLTYDAFGVLPPVSELSPAQAMYHFLSGYTAKVAGTEAGVNEPKATFSTCFGEPFMVRDPSVYAELLGQKIRRHDTDCWLVNTGMTGGPYGVGHRIELDHTRAMVDAILDGTLGTVARTRDPVFGLSIPDRVPGVPDSVLTPRQTWGDPQAYDQHARELVDAFADNFETYVEQVGTEVRAAGPSLETIRG.

The substrate site is built by Arg58, Tyr193, and Lys199. Residues Lys199, His218, and 234–242 (GLSGTGKTT) each bind ATP. Mn(2+) is bound by residues Lys199 and His218. Asp255 provides a ligand contact to Mn(2+). ATP-binding positions include Glu283, Arg321, 440–441 (RI), and Thr446. Position 321 (Arg321) interacts with substrate.

It belongs to the phosphoenolpyruvate carboxykinase (ATP) family. The cofactor is Mn(2+).

Its subcellular location is the cytoplasm. The enzyme catalyses oxaloacetate + ATP = phosphoenolpyruvate + ADP + CO2. It functions in the pathway carbohydrate biosynthesis; gluconeogenesis. In terms of biological role, involved in the gluconeogenesis. Catalyzes the conversion of oxaloacetate (OAA) to phosphoenolpyruvate (PEP) through direct phosphoryl transfer between the nucleoside triphosphate and OAA. In Salinibacter ruber (strain DSM 13855 / M31), this protein is Phosphoenolpyruvate carboxykinase (ATP) 1.